The chain runs to 614 residues: MSLLRCTTLLLVVVAIALPPCILGYSLHDGSRLDDFLTESAADRRPRRPTTAAQRRLMGLTEEQYKTVHFYLNKLKELGNQRHPEGYDKDTTKDEADKWRKRMRDDIEGELLNPEEYGRHFEGDIILFPEQAKQIYENALKTGQRRVKRKFIGSDLRRWDPTRPIVYSFDGSHTSREQRIIELALEHWHNITCLNFVRNDNANSGNRIVFTDVDGCASNVGRHPLGEEQLVSLAPECIRLGVIAHEVAHALGFWHEQSRPDRDQFVNVRWENIDKDSKGQFLKEDPDDVDNAGVPYDYGSIMHYRSKAFSRYDDLYTISTFVTDYQKTIGQRDQLSFNDIRLMNKIYCSNVCSRKLPCQRGGYTDPRRCDRCRCPDGFTGQFCEQVMPGYGAVCGGRIQVNGGWTKFSSPGYPREFKEGQECSWLLVAPHGQVVEMQFIGEFEMYCKVRHSLCMDYVEVRNSTDFANTGMRYCCYGTPSTSIRSATTDLVVLFRSFYRGGRGFEARARALPANGQWASWSPWTPCTASCGACGSRMRTRVCSHGACAGEPVENQVCNTHPCNGLCAHKKTEDGECGGFLALLRGVRCKQERTVMEPCENACCPGFSVVGGRCVR.

Positions Met-1–Gly-24 are cleaved as a signal peptide. Residues Tyr-25–Lys-150 constitute a propeptide that is removed on maturation. One can recognise a Peptidase M12A domain in the interval Lys-150–Ser-349. Asn-190 carries N-linked (GlcNAc...) asparagine glycosylation. 5 disulfide bridges follow: Cys-193-Cys-348, Cys-216-Cys-237, Cys-352-Cys-372, Cys-374-Cys-383, and Cys-394-Cys-422. Residue His-245 participates in Zn(2+) binding. The active site involves Glu-246. Residues His-249 and His-255 each contribute to the Zn(2+) site. One can recognise an EGF-like domain in the interval Asn-344 to Glu-384. The CUB domain occupies Cys-394 to Leu-510. An N-linked (GlcNAc...) asparagine glycan is attached at Asn-461. Residues Asn-513 to Asn-562 form the TSP type-1 domain. 3 disulfide bridges follow: Cys-525/Cys-556, Cys-529/Cys-561, and Cys-541/Cys-546.

Requires Zn(2+) as cofactor.

The protein resides in the secreted. Inhibited by marimastat and tripeptide hydroxamic acids. Inhibited by 1,10-phenanthroline. Its function is as follows. Metalloprotease which cleaves the carboxyl terminus of procollagens to mature collagens. Probably involved in cuticular collagen maturation. The protein is Zinc metalloproteinase dpy-31 of Teladorsagia circumcincta (Brown stomach worm).